Here is a 719-residue protein sequence, read N- to C-terminus: Plasmin and fibronectin-binding protein A (719 aa).

The N-terminal stretch at 1-45 (MLKIVKKLEVLMKYFVPNEVFSIRKLKVGTCSVLLAISILGSQGI) is a signal peptide. 2 disordered regions span residues 56–76 (PMAT…SPTV) and 109–128 (IRSN…TSTN). 5 PbH1 repeats span residues 287 to 310 (SNNV…QIAG), 362 to 384 (SENV…LVTA), 397 to 419 (PSNI…RFTG), 497 to 523 (VSDI…ELLR), and 525 to 546 (SDNL…VIED). A coiled-coil region spans residues 601–658 (NNLSDKNEKEKNKEEKQSNSNNVIDSNQKNGEFNSSKDNRQMNDKIDNKQDNKTEEVN). Residues 606 to 617 (KNEKEKNKEEKQ) are compositionally biased toward basic and acidic residues. The segment at 606-655 (KNEKEKNKEEKQSNSNNVIDSNQKNGEFNSSKDNRQMNDKIDNKQDNKTE) is disordered. Over residues 623–634 (VIDSNQKNGEFN) the composition is skewed to polar residues. A compositionally biased stretch (basic and acidic residues) spans 635-655 (SSKDNRQMNDKIDNKQDNKTE). The short motif at 685 to 689 (LPKTG) is the LPXTG sorting signal element. Position 688 is a pentaglycyl murein peptidoglycan amidated threonine (threonine 688). Positions 689–719 (GSNKIMELFLTVTGIGLLLTLKGLKYYGKDK) are cleaved as a propeptide — removed by sortase.

The protein localises to the secreted. It is found in the cell wall. Acts as a fibronectin-dependent adhesin and invasin. Binds host (in this case human) fibronectin, plasmin, plasminogen, and human serum albumin. Where the bacteria adhere to human cells there is major recruitment of microvilli which seem to fuse to cover the streptococcal chains. Antibodies to this protein reduce bacterial growth in human blood. The protein is Plasmin and fibronectin-binding protein A (pfbA) of Streptococcus pneumoniae (strain ATCC BAA-255 / R6).